The chain runs to 1153 residues: ATP-dependent helicase/deoxyribonuclease subunit B (1153 aa).

Residues 1–289 (MELNAYIGRA…KHLEQNFNAL (289 aa)) enclose the UvrD-like helicase ATP-binding domain. 8–15 (GRAGTGKS) provides a ligand contact to ATP. The 315-residue stretch at 269 to 583 (LDVQRFIHND…SIGTMDLAKV (315 aa)) folds into the UvrD-like helicase C-terminal domain. Residues Cys784, Cys1110, Cys1113, and Cys1119 each contribute to the [4Fe-4S] cluster site.

This sequence belongs to the helicase family. AddB/RexB type 1 subfamily. In terms of assembly, heterodimer of AddA and AddB. Requires Mg(2+) as cofactor. [4Fe-4S] cluster is required as a cofactor.

In terms of biological role, the heterodimer acts as both an ATP-dependent DNA helicase and an ATP-dependent, dual-direction single-stranded exonuclease. Recognizes the chi site generating a DNA molecule suitable for the initiation of homologous recombination. The AddB subunit has 5' -&gt; 3' nuclease activity but not helicase activity. The sequence is that of ATP-dependent helicase/deoxyribonuclease subunit B from Staphylococcus saprophyticus subsp. saprophyticus (strain ATCC 15305 / DSM 20229 / NCIMB 8711 / NCTC 7292 / S-41).